Here is a 958-residue protein sequence, read N- to C-terminus: Transportin MOS14 (958 aa).

Positions alanine 26 to lysine 93 constitute an Importin N-terminal domain.

The protein belongs to the importin beta family. As to quaternary structure, interacts with RS2Z33, RSZ21, RS31A, SR34 and RAN1.

It localises to the nucleus. In terms of biological role, functions as a nuclear import receptor for serine-arginine rich (SR) proteins. Regulates nuclear import of SR proteins that are required for proper splicing of the two resistance (R) genes SNC1 and RPS4, a crucial step for their functions in plant immunity. This is Transportin MOS14 from Arabidopsis thaliana (Mouse-ear cress).